The chain runs to 156 residues: Small ribosomal subunit protein uS7 (156 aa).

It belongs to the universal ribosomal protein uS7 family. In terms of assembly, part of the 30S ribosomal subunit. Contacts proteins S9 and S11.

One of the primary rRNA binding proteins, it binds directly to 16S rRNA where it nucleates assembly of the head domain of the 30S subunit. Is located at the subunit interface close to the decoding center, probably blocks exit of the E-site tRNA. The chain is Small ribosomal subunit protein uS7 from Bacillus cereus (strain G9842).